A 618-amino-acid chain; its full sequence is Vacuolar-sorting receptor 5 (618 aa).

The N-terminal stretch at 1-23 (MSPSNKGTVLALILALTMVVVNG) is a signal peptide. Residues 24–563 (FSSRFFVEKS…IERRSGSRSR (540 aa)) lie on the Lumenal side of the membrane. In terms of domain architecture, PA spans 58–164 (KYGGFMIGSV…SFGDSLKKAL (107 aa)). N-linked (GlcNAc...) asparagine glycosylation is found at Asn-81, Asn-293, and Asn-430. EGF-like domains follow at residues 412 to 462 (ETNE…TSCK) and 465 to 511 (GPAR…LKCE). Cystine bridges form between Cys-416/Cys-434, Cys-423/Cys-443, Cys-445/Cys-461, Cys-469/Cys-489, Cys-476/Cys-497, Cys-499/Cys-510, and Cys-540/Cys-553. Positions 512–554 (DIDECKEKSACKCDGCKCKNNWGGYECKCSNNSIYMKEEDTCI) constitute an EGF-like 3; calcium-binding domain. The N-linked (GlcNAc...) asparagine glycan is linked to Asn-542. The helical transmembrane segment at 564-584 (GLFTIVVLTAIAGISLGAYIF) threads the bilayer. The Cytoplasmic segment spans residues 585–618 (YKYHLQSYMDSEIVSIMSQYIPLDSQSINQDSFK). The Tyrosine-based internalization motif signature appears at 604–607 (YIPL).

Belongs to the VSR (BP-80) family. As to expression, expressed in seedlings, roots, leaves, flowers and siliques.

It is found in the membrane. It localises to the golgi apparatus membrane. The protein resides in the cytoplasmic vesicle. The protein localises to the clathrin-coated vesicle membrane. Its subcellular location is the prevacuolar compartment membrane. Its function is as follows. Vacuolar-sorting receptor (VSR) involved in clathrin-coated vesicles sorting from Golgi apparatus to vacuoles. The protein is Vacuolar-sorting receptor 5 (VSR5) of Arabidopsis thaliana (Mouse-ear cress).